A 456-amino-acid polypeptide reads, in one-letter code: ATP synthase subunit beta 1 (456 aa).

152 to 159 (GGAGVGKS) serves as a coordination point for ATP.

Belongs to the ATPase alpha/beta chains family. In terms of assembly, F-type ATPases have 2 components, CF(1) - the catalytic core - and CF(0) - the membrane proton channel. CF(1) has five subunits: alpha(3), beta(3), gamma(1), delta(1), epsilon(1). CF(0) has three main subunits: a(1), b(2) and c(9-12). The alpha and beta chains form an alternating ring which encloses part of the gamma chain. CF(1) is attached to CF(0) by a central stalk formed by the gamma and epsilon chains, while a peripheral stalk is formed by the delta and b chains.

It is found in the cell membrane. It carries out the reaction ATP + H2O + 4 H(+)(in) = ADP + phosphate + 5 H(+)(out). Produces ATP from ADP in the presence of a proton gradient across the membrane. The catalytic sites are hosted primarily by the beta subunits. The chain is ATP synthase subunit beta 1 from Listeria welshimeri serovar 6b (strain ATCC 35897 / DSM 20650 / CCUG 15529 / CIP 8149 / NCTC 11857 / SLCC 5334 / V8).